We begin with the raw amino-acid sequence, 152 residues long: 3-hydroxyacyl-[acyl-carrier-protein] dehydratase FabZ (152 aa).

The active site involves His-58.

The protein belongs to the thioester dehydratase family. FabZ subfamily.

The protein resides in the cytoplasm. The enzyme catalyses a (3R)-hydroxyacyl-[ACP] = a (2E)-enoyl-[ACP] + H2O. Its function is as follows. Involved in unsaturated fatty acids biosynthesis. Catalyzes the dehydration of short chain beta-hydroxyacyl-ACPs and long chain saturated and unsaturated beta-hydroxyacyl-ACPs. This is 3-hydroxyacyl-[acyl-carrier-protein] dehydratase FabZ from Synechococcus sp. (strain RCC307).